A 286-amino-acid chain; its full sequence is ATP synthase gamma chain (286 aa).

The protein belongs to the ATPase gamma chain family. In terms of assembly, F-type ATPases have 2 components, CF(1) - the catalytic core - and CF(0) - the membrane proton channel. CF(1) has five subunits: alpha(3), beta(3), gamma(1), delta(1), epsilon(1). CF(0) has three main subunits: a, b and c.

The protein resides in the cell inner membrane. Its function is as follows. Produces ATP from ADP in the presence of a proton gradient across the membrane. The gamma chain is believed to be important in regulating ATPase activity and the flow of protons through the CF(0) complex. The chain is ATP synthase gamma chain from Dechloromonas aromatica (strain RCB).